We begin with the raw amino-acid sequence, 309 residues long: Sulfate adenylyltransferase subunit 2 (309 aa).

This sequence belongs to the PAPS reductase family. CysD subfamily. Heterodimer composed of CysD, the smaller subunit, and CysN.

The enzyme catalyses sulfate + ATP + H(+) = adenosine 5'-phosphosulfate + diphosphate. The protein operates within sulfur metabolism; hydrogen sulfide biosynthesis; sulfite from sulfate: step 1/3. Its function is as follows. With CysN forms the ATP sulfurylase (ATPS) that catalyzes the adenylation of sulfate producing adenosine 5'-phosphosulfate (APS) and diphosphate, the first enzymatic step in sulfur assimilation pathway. APS synthesis involves the formation of a high-energy phosphoric-sulfuric acid anhydride bond driven by GTP hydrolysis by CysN coupled to ATP hydrolysis by CysD. The protein is Sulfate adenylyltransferase subunit 2 of Methylorubrum populi (strain ATCC BAA-705 / NCIMB 13946 / BJ001) (Methylobacterium populi).